Here is a 381-residue protein sequence, read N- to C-terminus: 5-cytosine rRNA methyltransferase NSUN4 (381 aa).

A mitochondrion-targeting transit peptide spans 1–25 (MAAPVLRCVRKLLKLVDFTPVPRRY). S-adenosyl-L-methionine contacts are provided by glycine 182, glycine 183, lysine 184, and aspartate 201. Serine 203 carries the phosphoserine modification. S-adenosyl-L-methionine is bound by residues arginine 206, aspartate 234, glycine 235, and aspartate 252. The active-site Nucleophile is the cysteine 307.

This sequence belongs to the class I-like SAM-binding methyltransferase superfamily. RsmB/NOP family. Heterodimer with MTERFD2/MTERF4; this interaction seems to be required for NSUN4 recruitment to the mitochondrial large ribosomal subunit.

The protein resides in the mitochondrion. It catalyses the reaction a cytidine in rRNA + S-adenosyl-L-methionine = a 5-methylcytidine in rRNA + S-adenosyl-L-homocysteine + H(+). The enzyme catalyses a cytidine in mRNA + S-adenosyl-L-methionine = a 5-methylcytidine in mRNA + S-adenosyl-L-homocysteine + H(+). In terms of biological role, mitochondrial RNA cytosine C(5)-methyltransferase that methylates cytosine to 5-methylcytosine (m5C) in various RNAs, such as rRNAs, mRNAs and some long non-coding RNAs (lncRNAs). Involved in mitochondrial ribosome small subunit (SSU) maturation by catalyzing methylation of mitochondrial 12S rRNA; the function is independent of MTERFD2/MTERF4 and assembled mitochondrial ribosome large subunit (LSU). Targeted to LSU by MTERFD2/MTERF4 and probably is involved in a final step in ribosome biogenesis to ensure that SSU and LSU are assembled. In vitro can methylate 16S rRNA of the LSU; the methylation is enhanced by MTERFD/MTERF4. Also acts as a regulator of innate immunity by marking double-stranded mitochondrial RNAs(mt-dsRNAs) generated in response to stress: catalyzes m5C modification on mitochondrial RNAs, such as a mRNAs and lncRNAs, with a preference for the termini of light-strand lncRNAs, promoting their degradation and cytosolic release. Modified light-strand lncRNAs are then recognized by C1QBP reader and recruited to the mitochondrial degradosome complex, which promotes their degradation. This is 5-cytosine rRNA methyltransferase NSUN4 from Mus musculus (Mouse).